The following is a 277-amino-acid chain: Trypsin-2 (277 aa).

A signal peptide spans Met-1–Cys-19. The propeptide at Ala-20 to Arg-50 is activation peptide. Residues Val-51–Gly-276 enclose the Peptidase S1 domain. Cys-76 and Cys-92 are disulfide-bonded. Residues His-91 and Asp-136 each act as charge relay system in the active site. 2 disulfides stabilise this stretch: Cys-201–Cys-217 and Cys-228–Cys-252. Residue Ser-232 is the Charge relay system of the active site.

It belongs to the peptidase S1 family. In terms of tissue distribution, midgut.

The protein resides in the secreted. The catalysed reaction is Preferential cleavage: Arg-|-Xaa, Lys-|-Xaa.. Functionally, major function may be to aid in digestion of the blood meal. This Anopheles gambiae (African malaria mosquito) protein is Trypsin-2 (TRYP2).